The following is a 145-amino-acid chain: Oocyte zinc finger protein XlCOF8.4I (145 aa).

Residues 1–25 (HKREADFCSKGNLTNPEISPVEHYP) are disordered. Residues 123 to 145 (LSCSECGKCFSTYHVLARHQKTH) form a C2H2-type zinc finger.

It belongs to the krueppel C2H2-type zinc-finger protein family.

It localises to the nucleus. May be involved in transcriptional regulation. The polypeptide is Oocyte zinc finger protein XlCOF8.4I (Xenopus laevis (African clawed frog)).